A 71-amino-acid chain; its full sequence is Small ribosomal subunit protein bS21 (71 aa).

The interval 38–71 (YEKPTTVRKRAKAAAQKRHAKKLSRENARRVRLY) is disordered. The segment covering 43–59 (TVRKRAKAAAQKRHAKK) has biased composition (basic residues). The segment covering 60 to 71 (LSRENARRVRLY) has biased composition (basic and acidic residues).

The protein belongs to the bacterial ribosomal protein bS21 family.

The chain is Small ribosomal subunit protein bS21 from Aliivibrio fischeri (strain ATCC 700601 / ES114) (Vibrio fischeri).